The sequence spans 228 residues: Thermonuclease (228 aa).

A signal peptide spans 1–23 (MTEYLLSAGICMAIVSILLIGMA). The propeptide occupies 24–60 (ISNVSKGQYAKRFFFFATSCLVLTLVVVSSLSSSANA). The segment covering 58–70 (ANASQTDNGVNRS) has biased composition (polar residues). Positions 58–83 (ANASQTDNGVNRSGSEDPTVYSATST) are disordered. Asp100 contacts Ca(2+). The active site involves Arg114. Residues Asp119 and Thr120 each contribute to the Ca(2+) site. Residues Glu122 and Arg166 contribute to the active site.

It belongs to the thermonuclease family. Ca(2+) is required as a cofactor.

It is found in the secreted. It carries out the reaction Endonucleolytic cleavage to nucleoside 3'-phosphates and 3'-phosphooligonucleotide end-products.. Enzyme that catalyzes the hydrolysis of both DNA and RNA at the 5' position of the phosphodiester bond. The chain is Thermonuclease (nuc) from Staphylococcus aureus (strain Mu50 / ATCC 700699).